The sequence spans 277 residues: 5-formyltetrahydrofolate cyclo-ligase, mitochondrial (277 aa).

Residues 1 to 48 (MIGARVFCITTTALRRSPIFFFPKIPTRPVFRLSPATRPIVAMSTTSK) constitute a mitochondrion transit peptide. An ATP-binding site is contributed by 60-64 (KRVVR). Residues glutamate 113 and 207–211 (RGGGY) contribute to the substrate site. Residues 206 to 213 (GRGGGYYD) and aspartate 254 each bind ATP.

The protein belongs to the 5-formyltetrahydrofolate cyclo-ligase family. Monomer.

The protein resides in the mitochondrion. The catalysed reaction is (6S)-5-formyl-5,6,7,8-tetrahydrofolate + ATP = (6R)-5,10-methenyltetrahydrofolate + ADP + phosphate. Contributes to tetrahydrofolate metabolism and photorespiration through the regulation of serine hydroxymethyltransferase. Prefers the pentalutamyl to the monoglutamyl form of 5-formyltetrahydrofolate. The chain is 5-formyltetrahydrofolate cyclo-ligase, mitochondrial (5FCL) from Arabidopsis thaliana (Mouse-ear cress).